A 285-amino-acid chain; its full sequence is Bifunctional protein FolD (285 aa).

NADP(+)-binding positions include 164–166 (GRS), Ser193, and Ile234.

The protein belongs to the tetrahydrofolate dehydrogenase/cyclohydrolase family. As to quaternary structure, homodimer.

It catalyses the reaction (6R)-5,10-methylene-5,6,7,8-tetrahydrofolate + NADP(+) = (6R)-5,10-methenyltetrahydrofolate + NADPH. It carries out the reaction (6R)-5,10-methenyltetrahydrofolate + H2O = (6R)-10-formyltetrahydrofolate + H(+). It functions in the pathway one-carbon metabolism; tetrahydrofolate interconversion. Catalyzes the oxidation of 5,10-methylenetetrahydrofolate to 5,10-methenyltetrahydrofolate and then the hydrolysis of 5,10-methenyltetrahydrofolate to 10-formyltetrahydrofolate. This chain is Bifunctional protein FolD, found in Desulfovibrio desulfuricans (strain ATCC 27774 / DSM 6949 / MB).